Consider the following 240-residue polypeptide: Caffeoyl-CoA O-methyltransferase 5 (240 aa).

Residue K14 participates in substrate binding. Residues T56, E78, 80 to 81 (GV), S86, D104, and A133 each bind S-adenosyl-L-methionine. Residue D156 participates in substrate binding. D156 contributes to the a divalent metal cation binding site. S-adenosyl-L-methionine is bound at residue D158. Positions 182 and 183 each coordinate a divalent metal cation. N187 provides a ligand contact to substrate.

This sequence belongs to the class I-like SAM-binding methyltransferase superfamily. Cation-dependent O-methyltransferase family. CCoAMT subfamily. Requires Mg(2+) as cofactor. Expression steadily increases from the bottom to the top of the plant.

The enzyme catalyses (E)-caffeoyl-CoA + S-adenosyl-L-methionine = (E)-feruloyl-CoA + S-adenosyl-L-homocysteine + H(+). The protein operates within aromatic compound metabolism; phenylpropanoid biosynthesis. Functionally, methylates caffeoyl-CoA to feruloyl-CoA and 5-hydroxyferuloyl-CoA to sinapoyl-CoA. Plays a role in the synthesis of feruloylated polysaccharides. Involved in the reinforcement of the plant cell wall. Also involved in the responding to wounding or pathogen challenge by the increased formation of cell wall-bound ferulic acid polymers. Methylates 5-hydroxyferulolyl-CoA more efficiently than caffeoyl-CoA. The polypeptide is Caffeoyl-CoA O-methyltransferase 5 (CCOAOMT5) (Nicotiana tabacum (Common tobacco)).